Reading from the N-terminus, the 342-residue chain is MWKKLMLLLLMAIPLVSAVAIPSISATDVVLVSDNCADQCTALEVADALNATVITTEWGIYNESLIDEILALNPDKVIIIGGPLAVVENYTTALENVGITVERIGGSNRYETNANVTLRFQNQFRYAFGNNTTVCVCHGFDDIALNETMGLIKNGTCLVLLTNGVNLSVEPQKLQLRINKVEIIENPICPFCNYSKLMLKLQKNGLKIEIKQIPKVKVKLMLQNRIRIMERRILMLKRMGVNVTDLEEKLKEVEQLMEQNRYQEAYRIMVQLQEEQMVRVKLHLHPMWSKMKRGKIQENKNASHIYHQNINNLTNELNTSRGGIGGINAPHIYHQRINSTIQ.

The N-terminal stretch at 1 to 18 is a signal peptide; the sequence is MWKKLMLLLLMAIPLVSA.

This is an uncharacterized protein from Methanocaldococcus jannaschii (strain ATCC 43067 / DSM 2661 / JAL-1 / JCM 10045 / NBRC 100440) (Methanococcus jannaschii).